Here is a 55-residue protein sequence, read N- to C-terminus: Large ribosomal subunit protein bL33 (55 aa).

The protein is methylated on either Ala-2 or Lys-3.

The chain is Large ribosomal subunit protein bL33 from Rhodopseudomonas palustris (strain ATCC BAA-98 / CGA009).